We begin with the raw amino-acid sequence, 399 residues long: S-adenosylmethionine synthase (399 aa).

His15 is an ATP binding site. Asp17 contributes to the Mg(2+) binding site. Glu43 serves as a coordination point for K(+). L-methionine contacts are provided by Glu56 and Gln99. The segment at 99-109 is flexible loop; sequence QSPDIAGGVDH. Residues 175-177, 242-243, Asp251, 257-258, Ala274, and Lys278 contribute to the ATP site; these read DAK, RF, and RK. Residue Asp251 participates in L-methionine binding. Lys282 contacts L-methionine.

This sequence belongs to the AdoMet synthase family. In terms of assembly, homotetramer; dimer of dimers. It depends on Mg(2+) as a cofactor. K(+) is required as a cofactor.

It is found in the cytoplasm. The enzyme catalyses L-methionine + ATP + H2O = S-adenosyl-L-methionine + phosphate + diphosphate. It participates in amino-acid biosynthesis; S-adenosyl-L-methionine biosynthesis; S-adenosyl-L-methionine from L-methionine: step 1/1. Functionally, catalyzes the formation of S-adenosylmethionine (AdoMet) from methionine and ATP. The overall synthetic reaction is composed of two sequential steps, AdoMet formation and the subsequent tripolyphosphate hydrolysis which occurs prior to release of AdoMet from the enzyme. The polypeptide is S-adenosylmethionine synthase (Lactobacillus helveticus (strain DPC 4571)).